Reading from the N-terminus, the 873-residue chain is Alanine--tRNA ligase (873 aa).

The Zn(2+) site is built by histidine 563, histidine 567, cysteine 664, and histidine 668.

This sequence belongs to the class-II aminoacyl-tRNA synthetase family. It depends on Zn(2+) as a cofactor.

It is found in the cytoplasm. The enzyme catalyses tRNA(Ala) + L-alanine + ATP = L-alanyl-tRNA(Ala) + AMP + diphosphate. Its function is as follows. Catalyzes the attachment of alanine to tRNA(Ala) in a two-step reaction: alanine is first activated by ATP to form Ala-AMP and then transferred to the acceptor end of tRNA(Ala). Also edits incorrectly charged Ser-tRNA(Ala) and Gly-tRNA(Ala) via its editing domain. The sequence is that of Alanine--tRNA ligase from Aromatoleum aromaticum (strain DSM 19018 / LMG 30748 / EbN1) (Azoarcus sp. (strain EbN1)).